The following is a 223-amino-acid chain: MAELKSLSGDSYLALSHSYTATGHAYAAARGPETTRGFGASGPGGDLPAAPASRVPAATVESSGEQSGDEDEAFERRRRRRGSGVAVDARRRPREQRSLRLSINARERRRMHDLNDALDGLRAVIPYAHSPSVRKLSKIATLLLAKNYILMQAQALEEMRRLVAYLNQGQGLAAPVAAAPLTPFGQAAIYPFSAGTALGPCPDKCATFSGSPSALCKHCGEKP.

Residues 32–93 (PETTRGFGAS…GVAVDARRRP (62 aa)) are disordered. The 55-residue stretch at 98–152 (SLRLSINARERRRMHDLNDALDGLRAVIPYAHSPSVRKLSKIATLLLAKNYILMQ) folds into the bHLH domain.

Expressed in brain and retina.

The protein localises to the nucleus. Its function is as follows. May function as transcriptional repressor. May modulate the expression of genes required for the differentiation and/or maintenance of pancreatic and neuronal cell types. May be important for rod bipolar cell maturation. The protein is Class E basic helix-loop-helix protein 23 (Bhlhe23) of Mus musculus (Mouse).